A 1220-amino-acid polypeptide reads, in one-letter code: Post-transcriptional regulator MKT1L (1220 aa).

The tract at residues 1 to 107 (MRKAGANRNN…SPWNSPPQQT (107 aa)) is disordered. Over residues 34–70 (PHHHQHQHHHQHQHQHQHQHQHPHQHPHQHHHHHPHH) the composition is skewed to basic residues.

It belongs to the XPG/RAD2 endonuclease family. Forms a complex composed of at least MKT1L, PBP1, XAC1 and LSM12.

The protein localises to the cytoplasm. Involved in post-transcriptional regulation of gene expression. In Trypanosoma brucei brucei (strain 927/4 GUTat10.1), this protein is Post-transcriptional regulator MKT1L.